Consider the following 88-residue polypeptide: Small ribosomal subunit protein uS17 (88 aa).

Belongs to the universal ribosomal protein uS17 family. Part of the 30S ribosomal subunit.

Functionally, one of the primary rRNA binding proteins, it binds specifically to the 5'-end of 16S ribosomal RNA. This Ruthia magnifica subsp. Calyptogena magnifica protein is Small ribosomal subunit protein uS17.